Reading from the N-terminus, the 606-residue chain is Aspartate--tRNA(Asp/Asn) ligase (606 aa).

Glu177 lines the L-aspartate pocket. The aspartate stretch occupies residues 201–204 (QLFK). Arg223 lines the L-aspartate pocket. ATP is bound by residues 223–225 (RDE) and Gln232. His461 is a binding site for L-aspartate. Residue Glu499 coordinates ATP. Arg506 is a binding site for L-aspartate. Position 551-554 (551-554 (GMDR)) interacts with ATP.

The protein belongs to the class-II aminoacyl-tRNA synthetase family. Type 1 subfamily. In terms of assembly, homodimer.

The protein localises to the cytoplasm. The enzyme catalyses tRNA(Asx) + L-aspartate + ATP = L-aspartyl-tRNA(Asx) + AMP + diphosphate. Its function is as follows. Aspartyl-tRNA synthetase with relaxed tRNA specificity since it is able to aspartylate not only its cognate tRNA(Asp) but also tRNA(Asn). Reaction proceeds in two steps: L-aspartate is first activated by ATP to form Asp-AMP and then transferred to the acceptor end of tRNA(Asp/Asn). The sequence is that of Aspartate--tRNA(Asp/Asn) ligase from Prochlorococcus marinus (strain MIT 9313).